Here is a 107-residue protein sequence, read N- to C-terminus: Glutaredoxin 4 (107 aa).

The Glutaredoxin domain occupies 4-106; that stretch reads IEKIERQIKD…KIISNAVLNS (103 aa). Residue Lys21 coordinates glutathione. Cys29 serves as a coordination point for [2Fe-2S] cluster. Glutathione is bound by residues Arg58, Phe70, and 83-84; that span reads CS.

It belongs to the glutaredoxin family. Monothiol subfamily. As to quaternary structure, homodimer.

The protein localises to the cytoplasm. Its function is as follows. Monothiol glutaredoxin involved in the biogenesis of iron-sulfur clusters. This Buchnera aphidicola subsp. Schizaphis graminum (strain Sg) protein is Glutaredoxin 4 (grxD).